Consider the following 409-residue polypeptide: MATINDNYLKLKAGYLFPEIGRRVSAFAEANPDAPIIKLGIGDVTEPLPEACRSAMVTAVEDMGNRDSFKGYGPEQGYGWLREKIAAHDFQARGCDVDAGEIFISDGSKCDCGNILDIFGDNNTIAVTDPVYPVYVDTNVMAGHTGPCNDQGEYEGLTYLPINAGNNFTAQIPSQKVDLIYLCFPNNPTGAVASKSHLQDWVNYAKSHGSIILFDAAYEAFITDPEIPHSIYEIEGARDCAIEFRSFSKNAGFTGTRCALTVVPKTLMAKAADESDVELWKLWNRRQSTKFNGVSYIVQRGAEAVYSEAGQAQTKALISFYLENAKIIREKLTAAGLQVFGGVNAPYVWVQTPNGISSWDFFDQLLHKTNVVGTPGSGFGAAGEGYFRISAFNSRANVEEAMRRITANL.

Positions 15 and 42 each coordinate substrate. Pyridoxal 5'-phosphate-binding positions include tyrosine 72, serine 108–lysine 109, tyrosine 132, asparagine 187, tyrosine 218, and serine 246–serine 248. 3 residues coordinate substrate: lysine 109, tyrosine 132, and asparagine 187. Lysine 249 carries the N6-(pyridoxal phosphate)lysine modification. Positions 257 and 292 each coordinate pyridoxal 5'-phosphate. Substrate-binding residues include asparagine 292 and arginine 388.

The protein belongs to the class-I pyridoxal-phosphate-dependent aminotransferase family. LL-diaminopimelate aminotransferase subfamily. As to quaternary structure, homodimer. The cofactor is pyridoxal 5'-phosphate.

It carries out the reaction (2S,6S)-2,6-diaminopimelate + 2-oxoglutarate = (S)-2,3,4,5-tetrahydrodipicolinate + L-glutamate + H2O + H(+). It participates in amino-acid biosynthesis; L-lysine biosynthesis via DAP pathway; LL-2,6-diaminopimelate from (S)-tetrahydrodipicolinate (aminotransferase route): step 1/1. Its function is as follows. Involved in the synthesis of meso-diaminopimelate (m-DAP or DL-DAP), required for both lysine and peptidoglycan biosynthesis. Catalyzes the direct conversion of tetrahydrodipicolinate to LL-diaminopimelate. This Acaryochloris marina (strain MBIC 11017) protein is LL-diaminopimelate aminotransferase.